A 412-amino-acid polypeptide reads, in one-letter code: uncharacterized protein (412 aa).

Disordered stretches follow at residues N150–D171, Q177–Q196, and Q302–P412. A compositionally biased stretch (low complexity) spans Q156 to Q168. Polar residues-rich tracts occupy residues Q177–S187 and M310–I321. Low complexity predominate over residues G335–N345. A compositionally biased stretch (polar residues) spans V350–L363. Low complexity-rich tracts occupy residues P364–P373 and T381–P394.

This is an uncharacterized protein from Dictyostelium discoideum (Social amoeba).